A 301-amino-acid chain; its full sequence is Rhodopsin (301 aa).

At 1-18 (LHMIHLHWYQYPPMNPMM) the chain is on the extracellular side. The helical transmembrane segment at 19–43 (YPLLLIFMLFTGILCLAGNFVTIWV) threads the bilayer. At 44-55 (FMNTKSLRTPAN) the chain is on the cytoplasmic side. Residues 56-78 (LLVVNLAMSDFLMMFTMFPPMMV) traverse the membrane as a helical segment. Topologically, residues 79 to 92 (TCYYHTWTLGPTFC) are extracellular. Residues cysteine 92 and cysteine 169 are joined by a disulfide bond. Residues 93-115 (QVYGFLGNLCGCASIWTMVFITF) form a helical membrane-spanning segment. Positions 116-118 (DRY) match the 'Ionic lock' involved in activated form stabilization motif. Residues 116-134 (DRYNVIVKGVAGEPLSTKK) are Cytoplasmic-facing. The chain crosses the membrane as a helical span at residues 135–155 (ASLWILIVWVLSLAWCMAPFF). The Extracellular segment spans residues 156–182 (GWNRYVPEGNLTGCGTDYLSEDILSRS). Asparagine 165 carries N-linked (GlcNAc...) asparagine glycosylation. The helical transmembrane segment at 183–204 (YLYIYSTWVYFLPLTITIYCYV) threads the bilayer. Residues 205–245 (FIIKAVAAHEKGMRDQAKKMGIKSLRNEEAQKTSAECRLAK) are Cytoplasmic-facing. Residues 246 to 267 (IAMTTVALWFIAWTPYLLINWV) form a helical membrane-spanning segment. The Extracellular portion of the chain corresponds to 268–278 (GMFARSYLSPV). A helical membrane pass occupies residues 279–300 (YTIWGYVFAKANAVYNPIVYAI). Position 288 is an N6-(retinylidene)lysine (lysine 288).

This sequence belongs to the G-protein coupled receptor 1 family. Opsin subfamily. In terms of assembly, homodimer. Interacts with GNAQ. Post-translationally, contains one covalently linked retinal chromophore.

Its subcellular location is the cell projection. The protein resides in the rhabdomere membrane. Photoreceptor required for image-forming vision at low light intensity. Can use both retinal and 3-dehydroretinal as visual pigment. Light-induced isomerization of 11-cis to all-trans retinal triggers a conformational change that activates signaling via G-proteins. Signaling via GNAQ probably mediates the activation of phospholipase C. The protein is Rhodopsin (RHO) of Procambarus milleri (Miami cave crayfish).